The primary structure comprises 293 residues: Acetylglutamate kinase (293 aa).

Substrate is bound by residues 68-69, Arg90, and Asn189; that span reads GG.

This sequence belongs to the acetylglutamate kinase family. ArgB subfamily.

It localises to the cytoplasm. The catalysed reaction is N-acetyl-L-glutamate + ATP = N-acetyl-L-glutamyl 5-phosphate + ADP. It participates in amino-acid biosynthesis; L-arginine biosynthesis; N(2)-acetyl-L-ornithine from L-glutamate: step 2/4. Catalyzes the ATP-dependent phosphorylation of N-acetyl-L-glutamate. This is Acetylglutamate kinase from Mycobacterium ulcerans (strain Agy99).